The following is a 449-amino-acid chain: Xylose isomerase (449 aa).

Catalysis depends on residues His103 and Asp106. The Mg(2+) site is built by Glu234, Glu270, His273, Asp298, Asp309, Asp311, and Asp342.

The protein belongs to the xylose isomerase family. Homotetramer. The cofactor is Mg(2+).

Its subcellular location is the cytoplasm. The catalysed reaction is alpha-D-xylose = alpha-D-xylulofuranose. This is Xylose isomerase from Levilactobacillus brevis (Lactobacillus brevis).